Reading from the N-terminus, the 511-residue chain is Probable endopeptidase p60 (511 aa).

An N-terminal signal peptide occupies residues 1–27; sequence MNMKKATIVSAAGIAVTAFAAPSVVSA. The region spanning 28–71 is the LysM 1 domain; that stretch reads NTVVVASGDTLWGIASKTGTTVDQLKQLNKLDSDRIVPGQKLTI. In terms of domain architecture, SH3b spans 78–142; it reads KVEKSVSATW…VNGKYLSDAK (65 aa). The LysM 2 domain maps to 175–218; the sequence is STYKVKSGDTIWALSVKYGVPVQKLIEWNNLSSSSIYVGQTIAV. Composition is skewed to low complexity over residues 229–257 and 264–282; these read TVKQAAPAKVAPKQEVKQTAPAKQEQAKP and KPAVSKPKAATPAPTAKPA. The tract at residues 229–291 is disordered; that stretch reads TVKQAAPAKV…AVEQKASTPA (63 aa). In terms of domain architecture, LysM 3 spans 297-341; that stretch reads ATYKVQNGDSLGKIASLFKVSVADLTNWNNLNATITIYAGQELSV. Composition is skewed to low complexity over residues 347 to 362 and 372 to 390; these read KPKPAAPAKPAVSKPA and TNTTNNSTPTTNVNNNTSQ. The tract at residues 347 to 390 is disordered; sequence KPKPAAPAKPAVSKPATSTPAKVTPTNTTNNSTPTTNVNNNTSQ. The region spanning 393 to 511 is the NlpC/P60 domain; sequence SASFSALYAE…GQYLVGFGRV (119 aa). C423 (nucleophile) is an active-site residue. H473 functions as the Proton acceptor in the catalytic mechanism. Residue D485 is part of the active site.

It belongs to the peptidase C40 family.

Functionally, this major extracellular protein may be involved in the invasion of non-professional phagocytic cells by Listeria. This is Probable endopeptidase p60 (iap) from Listeria grayi (Listeria murrayi).